Here is a 578-residue protein sequence, read N- to C-terminus: Aspartate--tRNA ligase (578 aa).

Glu169 contributes to the L-aspartate binding site. An aspartate region spans residues 191–194; sequence QTFK. Residue Arg213 participates in L-aspartate binding. ATP-binding positions include 213–215 and Gln222; that span reads RDE. His440 is a binding site for L-aspartate. Glu474 is an ATP binding site. Arg481 is a binding site for L-aspartate. Residue 526-529 coordinates ATP; it reads GLDR.

Belongs to the class-II aminoacyl-tRNA synthetase family. Type 1 subfamily. As to quaternary structure, homodimer.

It localises to the cytoplasm. It catalyses the reaction tRNA(Asp) + L-aspartate + ATP = L-aspartyl-tRNA(Asp) + AMP + diphosphate. Functionally, catalyzes the attachment of L-aspartate to tRNA(Asp) in a two-step reaction: L-aspartate is first activated by ATP to form Asp-AMP and then transferred to the acceptor end of tRNA(Asp). In Ureaplasma parvum serovar 3 (strain ATCC 700970), this protein is Aspartate--tRNA ligase.